Here is a 515-residue protein sequence, read N- to C-terminus: 2-isopropylmalate synthase (515 aa).

Positions 4–266 constitute a Pyruvate carboxyltransferase domain; the sequence is IKIFDTTLRD…ETGLILKETK (263 aa). Mn(2+)-binding residues include Asp13, His201, His203, and Asn237. Positions 392 to 515 are regulatory domain; sequence KLIQFGVSYD…ANLTRLVYES (124 aa).

This sequence belongs to the alpha-IPM synthase/homocitrate synthase family. LeuA type 1 subfamily. As to quaternary structure, homodimer. Mn(2+) serves as cofactor.

The protein resides in the cytoplasm. It carries out the reaction 3-methyl-2-oxobutanoate + acetyl-CoA + H2O = (2S)-2-isopropylmalate + CoA + H(+). Its pathway is amino-acid biosynthesis; L-leucine biosynthesis; L-leucine from 3-methyl-2-oxobutanoate: step 1/4. In terms of biological role, catalyzes the condensation of the acetyl group of acetyl-CoA with 3-methyl-2-oxobutanoate (2-ketoisovalerate) to form 3-carboxy-3-hydroxy-4-methylpentanoate (2-isopropylmalate). This chain is 2-isopropylmalate synthase, found in Oceanobacillus iheyensis (strain DSM 14371 / CIP 107618 / JCM 11309 / KCTC 3954 / HTE831).